The following is a 306-amino-acid chain: Aspartate carbamoyltransferase catalytic subunit (306 aa).

Arginine 49 and threonine 50 together coordinate carbamoyl phosphate. Lysine 77 contacts L-aspartate. Carbamoyl phosphate-binding residues include arginine 99, histidine 127, and glutamine 130. L-aspartate is bound by residues arginine 160 and arginine 211. Residues alanine 250 and proline 251 each contribute to the carbamoyl phosphate site.

Belongs to the aspartate/ornithine carbamoyltransferase superfamily. ATCase family. Heterododecamer (2C3:3R2) of six catalytic PyrB chains organized as two trimers (C3), and six regulatory PyrI chains organized as three dimers (R2).

It catalyses the reaction carbamoyl phosphate + L-aspartate = N-carbamoyl-L-aspartate + phosphate + H(+). It functions in the pathway pyrimidine metabolism; UMP biosynthesis via de novo pathway; (S)-dihydroorotate from bicarbonate: step 2/3. Catalyzes the condensation of carbamoyl phosphate and aspartate to form carbamoyl aspartate and inorganic phosphate, the committed step in the de novo pyrimidine nucleotide biosynthesis pathway. This Bacillus licheniformis (strain ATCC 14580 / DSM 13 / JCM 2505 / CCUG 7422 / NBRC 12200 / NCIMB 9375 / NCTC 10341 / NRRL NRS-1264 / Gibson 46) protein is Aspartate carbamoyltransferase catalytic subunit.